The chain runs to 785 residues: Semaphorin-3F (785 aa).

An N-terminal signal peptide occupies residues 1-18 (MLVAGLLLWASLLTGAWP). One can recognise a Sema domain in the interval 31-545 (RVRLSFKELK…SAVGVTHLSL (515 aa)). N-linked (GlcNAc...) asparagine glycosylation is present at Asn-53. An intrachain disulfide couples Cys-104 to Cys-115. Residue Asn-126 is glycosylated (N-linked (GlcNAc...) asparagine). 5 disulfide bridges follow: Cys-133–Cys-142, Cys-300–Cys-412, Cys-324–Cys-372, Cys-548–Cys-566, and Cys-678–Cys-746. The Ig-like C2-type domain occupies 605 to 690 (ANKNAVESVQ…TENNFKHVVT (86 aa)). Residues 752–785 (HVPPSPREAPGAPRSPEPQDQKKPRNRRHHPPDT) are disordered. Basic residues predominate over residues 775–785 (PRNRRHHPPDT).

It belongs to the semaphorin family. As to expression, expressed abundantly but differentially in a variety of neural and nonneural tissues. There is high expression in mammary gland, kidney, fetal brain, and lung and lower expression in heart and liver.

It is found in the secreted. In terms of biological role, may play a role in cell motility and cell adhesion. The protein is Semaphorin-3F (SEMA3F) of Homo sapiens (Human).